The following is a 348-amino-acid chain: Protein RecA (348 aa).

64–71 (GPESSGKT) is an ATP binding site. Over residues 325 to 335 (YEIDGASKEPL) the composition is skewed to basic and acidic residues. Residues 325–348 (YEIDGASKEPLEETEETLSLLDDE) are disordered. Over residues 336–348 (EETEETLSLLDDE) the composition is skewed to acidic residues.

The protein belongs to the RecA family.

It is found in the cytoplasm. Functionally, can catalyze the hydrolysis of ATP in the presence of single-stranded DNA, the ATP-dependent uptake of single-stranded DNA by duplex DNA, and the ATP-dependent hybridization of homologous single-stranded DNAs. It interacts with LexA causing its activation and leading to its autocatalytic cleavage. The polypeptide is Protein RecA (Listeria seeligeri).